The sequence spans 340 residues: Probable dual-specificity RNA methyltransferase RlmN (340 aa).

The active-site Proton acceptor is Glu91. The Radical SAM core domain occupies 97 to 326; that stretch reads HSGRVTACIS…CEIRKEKGTD (230 aa). Cysteines 104 and 331 form a disulfide. [4Fe-4S] cluster-binding residues include Cys111, Cys115, and Cys118. S-adenosyl-L-methionine-binding positions include 158–159, Ser190, 213–215, and Asn289; these read GE and SLH. Cys331 acts as the S-methylcysteine intermediate in catalysis.

It belongs to the radical SAM superfamily. RlmN family. [4Fe-4S] cluster is required as a cofactor.

It localises to the cytoplasm. The enzyme catalyses adenosine(2503) in 23S rRNA + 2 reduced [2Fe-2S]-[ferredoxin] + 2 S-adenosyl-L-methionine = 2-methyladenosine(2503) in 23S rRNA + 5'-deoxyadenosine + L-methionine + 2 oxidized [2Fe-2S]-[ferredoxin] + S-adenosyl-L-homocysteine. It carries out the reaction adenosine(37) in tRNA + 2 reduced [2Fe-2S]-[ferredoxin] + 2 S-adenosyl-L-methionine = 2-methyladenosine(37) in tRNA + 5'-deoxyadenosine + L-methionine + 2 oxidized [2Fe-2S]-[ferredoxin] + S-adenosyl-L-homocysteine. In terms of biological role, specifically methylates position 2 of adenine 2503 in 23S rRNA and position 2 of adenine 37 in tRNAs. The sequence is that of Probable dual-specificity RNA methyltransferase RlmN from Thermosipho melanesiensis (strain DSM 12029 / CIP 104789 / BI429).